The chain runs to 303 residues: N-acetyl-D-glucosamine kinase (303 aa).

ATP-binding positions include 4–11 (GFDIGGTK) and 133–140 (GVGGGLIF). The Zn(2+) site is built by His-157, Cys-177, Cys-179, and Cys-184.

The protein belongs to the ROK (NagC/XylR) family. NagK subfamily.

It catalyses the reaction N-acetyl-D-glucosamine + ATP = N-acetyl-D-glucosamine 6-phosphate + ADP + H(+). The protein operates within cell wall biogenesis; peptidoglycan recycling. In terms of biological role, catalyzes the phosphorylation of N-acetyl-D-glucosamine (GlcNAc) derived from cell-wall degradation, yielding GlcNAc-6-P. This Escherichia coli O9:H4 (strain HS) protein is N-acetyl-D-glucosamine kinase.